A 154-amino-acid polypeptide reads, in one-letter code: Holo-[acyl-carrier-protein] synthase (154 aa).

Residues aspartate 8 and glutamate 57 each coordinate Mg(2+).

It belongs to the P-Pant transferase superfamily. AcpS family. It depends on Mg(2+) as a cofactor.

It localises to the cytoplasm. It carries out the reaction apo-[ACP] + CoA = holo-[ACP] + adenosine 3',5'-bisphosphate + H(+). Transfers the 4'-phosphopantetheine moiety from coenzyme A to a Ser of acyl-carrier-protein. This is Holo-[acyl-carrier-protein] synthase from Nitrosococcus oceani (strain ATCC 19707 / BCRC 17464 / JCM 30415 / NCIMB 11848 / C-107).